Consider the following 123-residue polypeptide: Polyadenylate-binding protein-interacting protein 2B (123 aa).

Position 1 is an N-acetylmethionine (M1). Over residues 1-13 (MNGSNMANTSPSV) the composition is skewed to polar residues. 2 disordered regions span residues 1–30 (MNGS…KENP) and 91–123 (NGLS…GEKY). 2 stretches are compositionally biased toward basic and acidic residues: residues 14-30 (KSKE…KENP) and 113-123 (DAKEFIPGEKY).

This sequence belongs to the PAIP2 family. In terms of assembly, interacts (via central acidic portion and C-terminus) with PABPC1 (via the second and third RRM domains and the C-terminus). In terms of processing, ubiquitinated in vitro. As to expression, expressed in brain, cervix, heart, liver, ovary, kidney, prostate and testis.

Its function is as follows. Inhibits translation of capped and polyadenylated mRNAs by displacing PABPC1 from the poly(A) tail. In Homo sapiens (Human), this protein is Polyadenylate-binding protein-interacting protein 2B (PAIP2B).